Consider the following 157-residue polypeptide: MATELSLSVQYGVADARLPRWRLRRWVQYALAGAAGDGHAGLAGAELGLRLVGLAEGRRLNREFRGRDYATNVLTFEYGTGPDGVARGDIVVCVPVLAREAREQRKTLLDHAAHLTVHGTLHALGYDHIKAGEARRMEALETVVLARMGIADPYLAA.

Zn(2+) contacts are provided by H118, H122, and H128.

This sequence belongs to the endoribonuclease YbeY family. Zn(2+) is required as a cofactor.

The protein localises to the cytoplasm. Functionally, single strand-specific metallo-endoribonuclease involved in late-stage 70S ribosome quality control and in maturation of the 3' terminus of the 16S rRNA. The chain is Endoribonuclease YbeY from Bordetella parapertussis (strain 12822 / ATCC BAA-587 / NCTC 13253).